The primary structure comprises 261 residues: 5'-nucleotidase SurE (261 aa).

A divalent metal cation is bound by residues Asp-8, Asp-9, Ser-43, and Asn-96.

It belongs to the SurE nucleotidase family. Requires a divalent metal cation as cofactor.

The protein localises to the cytoplasm. The enzyme catalyses a ribonucleoside 5'-phosphate + H2O = a ribonucleoside + phosphate. Functionally, nucleotidase that shows phosphatase activity on nucleoside 5'-monophosphates. This Cereibacter sphaeroides (strain ATCC 17025 / ATH 2.4.3) (Rhodobacter sphaeroides) protein is 5'-nucleotidase SurE.